Here is an 880-residue protein sequence, read N- to C-terminus: Alanine--tRNA ligase (880 aa).

Zn(2+) is bound by residues His566, His570, Cys668, and His672.

Belongs to the class-II aminoacyl-tRNA synthetase family. Zn(2+) is required as a cofactor.

It is found in the cytoplasm. The catalysed reaction is tRNA(Ala) + L-alanine + ATP = L-alanyl-tRNA(Ala) + AMP + diphosphate. In terms of biological role, catalyzes the attachment of alanine to tRNA(Ala) in a two-step reaction: alanine is first activated by ATP to form Ala-AMP and then transferred to the acceptor end of tRNA(Ala). Also edits incorrectly charged Ser-tRNA(Ala) and Gly-tRNA(Ala) via its editing domain. The sequence is that of Alanine--tRNA ligase from Trichormus variabilis (strain ATCC 29413 / PCC 7937) (Anabaena variabilis).